We begin with the raw amino-acid sequence, 118 residues long: RxLR effector protein PITG_19617 (118 aa).

The first 21 residues, 1–21, serve as a signal peptide directing secretion; that stretch reads MRAVYILAMACAATLQASSSA. Positions 50–64 match the RxLR-dEER motif; that stretch reads RLLRVEDKEEETEEE.

This sequence belongs to the RxLR effector family.

It localises to the secreted. It is found in the host nucleus. The protein localises to the host cytoplasm. Its function is as follows. Effector that enhances P.infestans colonization of Nicotiana benthamiana leaves. This chain is RxLR effector protein PITG_19617, found in Phytophthora infestans (strain T30-4) (Potato late blight agent).